The following is a 391-amino-acid chain: 4-hydroxy-3-methylbut-2-en-1-yl diphosphate synthase (flavodoxin) (391 aa).

Positions 286, 289, 321, and 328 each coordinate [4Fe-4S] cluster.

The protein belongs to the IspG family. The cofactor is [4Fe-4S] cluster.

The catalysed reaction is (2E)-4-hydroxy-3-methylbut-2-enyl diphosphate + oxidized [flavodoxin] + H2O + 2 H(+) = 2-C-methyl-D-erythritol 2,4-cyclic diphosphate + reduced [flavodoxin]. The protein operates within isoprenoid biosynthesis; isopentenyl diphosphate biosynthesis via DXP pathway; isopentenyl diphosphate from 1-deoxy-D-xylulose 5-phosphate: step 5/6. Its function is as follows. Converts 2C-methyl-D-erythritol 2,4-cyclodiphosphate (ME-2,4cPP) into 1-hydroxy-2-methyl-2-(E)-butenyl 4-diphosphate. This is 4-hydroxy-3-methylbut-2-en-1-yl diphosphate synthase (flavodoxin) from Corynebacterium diphtheriae (strain ATCC 700971 / NCTC 13129 / Biotype gravis).